A 282-amino-acid polypeptide reads, in one-letter code: Bis(5'-nucleosyl)-tetraphosphatase, symmetrical (282 aa).

It belongs to the Ap4A hydrolase family.

The enzyme catalyses P(1),P(4)-bis(5'-adenosyl) tetraphosphate + H2O = 2 ADP + 2 H(+). Hydrolyzes diadenosine 5',5'''-P1,P4-tetraphosphate to yield ADP. In Klebsiella pneumoniae subsp. pneumoniae (strain ATCC 700721 / MGH 78578), this protein is Bis(5'-nucleosyl)-tetraphosphatase, symmetrical.